Here is a 444-residue protein sequence, read N- to C-terminus: Probable glycine dehydrogenase (decarboxylating) subunit 1 (444 aa).

Belongs to the GcvP family. N-terminal subunit subfamily. The glycine cleavage system is composed of four proteins: P, T, L and H. In this organism, the P 'protein' is a heterodimer of two subunits.

The enzyme catalyses N(6)-[(R)-lipoyl]-L-lysyl-[glycine-cleavage complex H protein] + glycine + H(+) = N(6)-[(R)-S(8)-aminomethyldihydrolipoyl]-L-lysyl-[glycine-cleavage complex H protein] + CO2. Its function is as follows. The glycine cleavage system catalyzes the degradation of glycine. The P protein binds the alpha-amino group of glycine through its pyridoxal phosphate cofactor; CO(2) is released and the remaining methylamine moiety is then transferred to the lipoamide cofactor of the H protein. In Prosthecochloris aestuarii (strain DSM 271 / SK 413), this protein is Probable glycine dehydrogenase (decarboxylating) subunit 1.